The following is a 471-amino-acid chain: Abscission/NoCut checkpoint regulator (471 aa).

Residues 39–64 (GGAGQGREGRSWGEGPRGPGLGRRDL) form a disordered region. Residues 74–133 (ATMESRCYGCAVKFTLFKKEYGCKNCGRAFCSGCLSFSAAVPRTGNTQQKVCKQCHEVLT) form an FYVE-type zinc finger. Zn(2+)-binding residues include Cys80, Cys83, Cys96, Cys99, Cys104, Cys107, Cys125, and Cys128. Ser144 is modified (phosphoserine). An MIM1-A motif is present at residues 174–187 (DQMIAERLARLRQE). Lys207 is covalently cross-linked (Glycyl lysine isopeptide (Lys-Gly) (interchain with G-Cter in SUMO2)). Thr243 is modified (phosphothreonine). The disordered stretch occupies residues 271–299 (KGGGPAASLQNDLNQGGPGSTNSKRQANW). Polar residues predominate over residues 278–299 (SLQNDLNQGGPGSTNSKRQANW). Phosphoserine occurs at positions 286 and 293. The stretch at 311 to 375 (EAALELREEN…RVLQQLTEEA (65 aa)) forms a coiled coil. Residues 326–339 (ILALAKRLAMLRGQ) carry the MIM1-B motif. Ser354 carries the phosphoserine modification. The disordered stretch occupies residues 386–412 (PAEQASRPWTQPRGAEPEAQDVDPRPE). Phosphoserine is present on Ser463.

As to quaternary structure, interacts (via MIM1-B) with VPS4A; interaction takes place at the midbody ring following cytokinesis checkpoint activation. Phosphorylated in vitro at Ser-22 by AURKB; however, phosphorylation at this site could not be confirmed in vivo. In terms of tissue distribution, detected in brain, heart, skeletal muscle and kidney. Expressed in the liver (at protein level).

The protein resides in the cytoplasm. Its subcellular location is the cytoskeleton. It localises to the microtubule organizing center. The protein localises to the centrosome. It is found in the cleavage furrow. The protein resides in the midbody. Its subcellular location is the midbody ring. In terms of biological role, key regulator of abscission step in cytokinesis: part of the cytokinesis checkpoint, a process required to delay abscission to prevent both premature resolution of intercellular chromosome bridges and accumulation of DNA damage. Together with CHMP4C, required to retain abscission-competent VPS4 (VPS4A and/or VPS4B) at the midbody ring until abscission checkpoint signaling is terminated at late cytokinesis. Deactivation of AURKB results in dephosphorylation of CHMP4C followed by its dissociation from ZFYVE19/ANCHR and VPS4 and subsequent abscission. In Homo sapiens (Human), this protein is Abscission/NoCut checkpoint regulator (ZFYVE19).